The chain runs to 319 residues: Nucleotide-binding protein Mvan_2698 (319 aa).

The segment covering 1 to 12 has biased composition (basic and acidic residues); it reads MTEQGMHQELRE. Residues 1–26 are disordered; that stretch reads MTEQGMHQELREGAGTAGDEGGLEAA. ATP is bound at residue 43 to 50; sequence GLSGAGRG. Residue 94–97 coordinates GTP; sequence DVRS.

Belongs to the RapZ-like family.

Displays ATPase and GTPase activities. This chain is Nucleotide-binding protein Mvan_2698, found in Mycolicibacterium vanbaalenii (strain DSM 7251 / JCM 13017 / BCRC 16820 / KCTC 9966 / NRRL B-24157 / PYR-1) (Mycobacterium vanbaalenii).